Here is a 325-residue protein sequence, read N- to C-terminus: MIALGIEGTAHTLGIGIVTEKKVLANVFDTLTTEKGGIHPKEAAEHHARLLKPLLRKALQTAGITMEDVDVIAFSQGPGLGPALRVVATAARALAIKYNKPIVGVNHCIAHVEITKMFGVKDPVGLYVSGGNTQVLALEGGRYRVFGETLDIGIGNAIDTFARELGIGFPGGPKIEKLALKGERYIELPSAVKGMDLSFSGLLTEAVRKYRTGRYRVEDLAYSFQETAFSALVEVTERAVAHTGKNEVVLVGGVAANNRLREMLKIMAEDRGVEFFVPPYDLCRDNGAMIAYTGLRMYLGGVRFKISDTVVKQKFRTDEVDVTWS.

Fe cation contacts are provided by His107, His111, and Tyr127. Substrate contacts are provided by residues 127 to 131, Asp159, Gly172, Glu176, and Asn257; that span reads YVSGG. Fe cation is bound at residue Asp285.

The protein belongs to the KAE1 / TsaD family. In terms of assembly, monomer. Component of the KEOPS complex that consists of Kae1, Bud32, Cgi121 and Pcc1; the whole complex dimerizes. Fe(2+) is required as a cofactor.

The protein localises to the cytoplasm. The catalysed reaction is L-threonylcarbamoyladenylate + adenosine(37) in tRNA = N(6)-L-threonylcarbamoyladenosine(37) in tRNA + AMP + H(+). In terms of biological role, required for the formation of a threonylcarbamoyl group on adenosine at position 37 (t(6)A37) in tRNAs that read codons beginning with adenine. Is a component of the KEOPS complex that is probably involved in the transfer of the threonylcarbamoyl moiety of threonylcarbamoyl-AMP (TC-AMP) to the N6 group of A37. Kae1 likely plays a direct catalytic role in this reaction, but requires other protein(s) of the complex to fulfill this activity. This Thermococcus gammatolerans (strain DSM 15229 / JCM 11827 / EJ3) protein is tRNA N6-adenosine threonylcarbamoyltransferase.